Reading from the N-terminus, the 274-residue chain is 2,3,4,5-tetrahydropyridine-2,6-dicarboxylate N-succinyltransferase (274 aa).

Substrate-binding residues include R106 and D143.

It belongs to the transferase hexapeptide repeat family. In terms of assembly, homotrimer.

It is found in the cytoplasm. It catalyses the reaction (S)-2,3,4,5-tetrahydrodipicolinate + succinyl-CoA + H2O = (S)-2-succinylamino-6-oxoheptanedioate + CoA. Its pathway is amino-acid biosynthesis; L-lysine biosynthesis via DAP pathway; LL-2,6-diaminopimelate from (S)-tetrahydrodipicolinate (succinylase route): step 1/3. The protein is 2,3,4,5-tetrahydropyridine-2,6-dicarboxylate N-succinyltransferase of Rickettsia felis (strain ATCC VR-1525 / URRWXCal2) (Rickettsia azadi).